The following is a 176-amino-acid chain: Protein MOTHER of FT and TFL1 homolog 1 (176 aa).

The protein belongs to the phosphatidylethanolamine-binding protein family.

Its function is as follows. May form complexes with phosphorylated ligands by interfering with kinases and their effectors. The chain is Protein MOTHER of FT and TFL1 homolog 1 from Oryza sativa subsp. japonica (Rice).